The chain runs to 419 residues: Light-dependent chlorophyll f synthase (419 aa).

5 helical membrane-spanning segments follow: residues tyrosine 73 to isoleucine 90, histidine 162 to leucine 177, tryptophan 186 to serine 200, leucine 241 to leucine 262, and cysteine 323 to isoleucine 337. Histidine 162 provides a ligand contact to a chlorophyll. Position 242 (histidine 242) interacts with a chlorophyll.

The protein belongs to the reaction center PufL/M/PsbA/D family. Homodimer.

It localises to the cellular thylakoid membrane. Functionally, synthesizes chlorophyll f or chlorophyllide f (Chl f, 2-formyl chlorophyll a), probably by oxidation of chlorophyll a or chlorophyllide a and reduction of plastoquinone. The reaction is probably light-dependent. Chl f absorbs far red light (FRL, 707 nm in 100% methanol), and is synthesized when cells are grown in FRL, where it provides the advantage of extending the spectral range of harvested light in terrestrial cyanobacteria. Chl f synthesis is probably light-dependent. In Synechococcus sp. (strain ATCC 29403 / PCC 7335), this protein is Light-dependent chlorophyll f synthase.